The chain runs to 415 residues: Stimulator of interferon genes protein (415 aa).

Residues 29-163 (HVYHAFISYC…DIIQAISKPE (135 aa)) enclose the TIR domain. The active site involves glutamate 104. Arginine 256 lines the 2',3'-cGAMP pocket. The interval 387-415 (KSPSSTNMVKSEPNIYREESGKTKSVERG) is disordered. The span at 401–415 (IYREESGKTKSVERG) shows a compositional bias: basic and acidic residues.

In the N-terminal section; belongs to the Toll-like receptor family. This sequence in the C-terminal section; belongs to the TMEM173 family. Homodimer.

It catalyses the reaction NAD(+) + H2O = ADP-D-ribose + nicotinamide + H(+). In terms of biological role, sensor of cytosolic DNA from bacteria and viruses that promotes autophagy. Binds c-di-AMP, 2'3'-cGAMP, 3'3'-cGAMP and to a lesser extent c-di-GMP. Nucleotide binding has not been seen to stimulate NAD(+) hydrolase activity. The chain is Stimulator of interferon genes protein from Magallana gigas (Pacific oyster).